We begin with the raw amino-acid sequence, 415 residues long: Glucose-6-phosphate isomerase (415 aa).

The Proton donor role is filled by Glu267. Catalysis depends on residues His293 and Lys406.

It belongs to the GPI family.

The protein resides in the cytoplasm. It carries out the reaction alpha-D-glucose 6-phosphate = beta-D-fructose 6-phosphate. Its pathway is carbohydrate biosynthesis; gluconeogenesis. The protein operates within carbohydrate degradation; glycolysis; D-glyceraldehyde 3-phosphate and glycerone phosphate from D-glucose: step 2/4. Functionally, catalyzes the reversible isomerization of glucose-6-phosphate to fructose-6-phosphate. The sequence is that of Glucose-6-phosphate isomerase from Thermus thermophilus (strain ATCC 27634 / DSM 579 / HB8).